A 491-amino-acid chain; its full sequence is Cytochrome P450 2C40 (491 aa).

A signal peptide spans 1–25; sequence MDPFVVLVLCLSFLLVLSLWRQRSA. Cysteine 435 contacts heme.

Belongs to the cytochrome P450 family. Heme serves as cofactor. As to expression, liver, brain, kidney, and intestine, with trace amounts in lung and heart. Expressed throughout the intestinal tract, with higher expression levels in jejunum, cecum and colon.

The protein localises to the endoplasmic reticulum membrane. Its subcellular location is the microsome membrane. It catalyses the reaction (5Z,8Z,11Z,14Z)-eicosatetraenoate + reduced [NADPH--hemoprotein reductase] + O2 = 16(R)-hydroxy-(5Z,8Z,11Z,14Z)-eicosatetraenoate + oxidized [NADPH--hemoprotein reductase] + H2O + H(+). The enzyme catalyses (5Z,8Z,11Z,14Z)-eicosatetraenoate + reduced [NADPH--hemoprotein reductase] + O2 = 16(S)-hydroxy-(5Z,8Z,11Z,14Z)-eicosatetraenoate + oxidized [NADPH--hemoprotein reductase] + H2O + H(+). The catalysed reaction is (5Z,8Z,11Z,14Z)-eicosatetraenoate + reduced [NADPH--hemoprotein reductase] + O2 = (14R,15S)-epoxy-(5Z,8Z,11Z)-eicosatrienoate + oxidized [NADPH--hemoprotein reductase] + H2O + H(+). It carries out the reaction (5Z,8Z,11Z,14Z)-eicosatetraenoate + reduced [NADPH--hemoprotein reductase] + O2 = (14S,15R)-epoxy-(5Z,8Z,11Z)-eicosatrienoate + oxidized [NADPH--hemoprotein reductase] + H2O + H(+). It participates in lipid metabolism; arachidonate metabolism. Functionally, a cytochrome P450 monooxygenase that may play a major role in the metabolism of arachidonic acid in the intestinal tract. Exhibits regioselective hydroxylase and epoxidase activity toward arachidonic acid, producing 16(R)-hydroxyeicosatetraenoic acid (HETE) and (14R,15S)-epoxyeicosatrienoic acid (EpETrE) as major products. Mechanistically, uses molecular oxygen inserting one oxygen atom into a substrate, and reducing the second into a water molecule, with two electrons provided by NADPH via cytochrome P450 reductase (CPR; NADPH-ferrihemoprotein reductase). The sequence is that of Cytochrome P450 2C40 from Mus musculus (Mouse).